The following is a 555-amino-acid chain: Sulfite reductase [NADPH] hemoprotein beta-component (555 aa).

Positions 430, 436, 475, and 479 each coordinate [4Fe-4S] cluster. Cysteine 479 contacts siroheme.

The protein belongs to the nitrite and sulfite reductase 4Fe-4S domain family. Alpha(8)-beta(8). The alpha component is a flavoprotein, the beta component is a hemoprotein. The cofactor is siroheme. [4Fe-4S] cluster is required as a cofactor.

It catalyses the reaction hydrogen sulfide + 3 NADP(+) + 3 H2O = sulfite + 3 NADPH + 4 H(+). The protein operates within sulfur metabolism; hydrogen sulfide biosynthesis; hydrogen sulfide from sulfite (NADPH route): step 1/1. Component of the sulfite reductase complex that catalyzes the 6-electron reduction of sulfite to sulfide. This is one of several activities required for the biosynthesis of L-cysteine from sulfate. The protein is Sulfite reductase [NADPH] hemoprotein beta-component of Leptospira biflexa serovar Patoc (strain Patoc 1 / Ames).